A 427-amino-acid polypeptide reads, in one-letter code: Serine--tRNA ligase (427 aa).

An L-serine-binding site is contributed by 233–235; the sequence is TAE. 264 to 266 provides a ligand contact to ATP; it reads RSE. Residue E287 coordinates L-serine. Residue 351–354 coordinates ATP; that stretch reads EISS. S386 contacts L-serine.

It belongs to the class-II aminoacyl-tRNA synthetase family. Type-1 seryl-tRNA synthetase subfamily. In terms of assembly, homodimer. The tRNA molecule binds across the dimer.

The protein resides in the cytoplasm. The enzyme catalyses tRNA(Ser) + L-serine + ATP = L-seryl-tRNA(Ser) + AMP + diphosphate + H(+). It carries out the reaction tRNA(Sec) + L-serine + ATP = L-seryl-tRNA(Sec) + AMP + diphosphate + H(+). It functions in the pathway aminoacyl-tRNA biosynthesis; selenocysteinyl-tRNA(Sec) biosynthesis; L-seryl-tRNA(Sec) from L-serine and tRNA(Sec): step 1/1. Its function is as follows. Catalyzes the attachment of serine to tRNA(Ser). Is also able to aminoacylate tRNA(Sec) with serine, to form the misacylated tRNA L-seryl-tRNA(Sec), which will be further converted into selenocysteinyl-tRNA(Sec). The polypeptide is Serine--tRNA ligase (Thiobacillus denitrificans (strain ATCC 25259 / T1)).